Consider the following 180-residue polypeptide: MTTIVSVRRNGHIVIGGDGQATLGNTIMKNNVKKVRTLYNDTVIAGFAGGTADAFTLFELFEKKLQIHQGRFVKSAVELAKDWRTDRMLRRLEALLAVADKNTSLIITGNADVIQPESDVIAIGSGGPYAQSAARALLENTDLCARDIVRKSLQISGDICLYSNHFFSFEELIHENKDII.

Threonine 2 is an active-site residue. The Na(+) site is built by glycine 157, cysteine 160, and serine 163.

Belongs to the peptidase T1B family. HslV subfamily. As to quaternary structure, a double ring-shaped homohexamer of HslV is capped on each side by a ring-shaped HslU homohexamer. The assembly of the HslU/HslV complex is dependent on binding of ATP.

It is found in the cytoplasm. It carries out the reaction ATP-dependent cleavage of peptide bonds with broad specificity.. Its activity is regulated as follows. Allosterically activated by HslU binding. Functionally, protease subunit of a proteasome-like degradation complex believed to be a general protein degrading machinery. This chain is ATP-dependent protease subunit HslV, found in Wigglesworthia glossinidia brevipalpis.